A 187-amino-acid chain; its full sequence is Ribosome-recycling factor (187 aa).

This sequence belongs to the RRF family.

Its subcellular location is the cytoplasm. In terms of biological role, responsible for the release of ribosomes from messenger RNA at the termination of protein biosynthesis. May increase the efficiency of translation by recycling ribosomes from one round of translation to another. The sequence is that of Ribosome-recycling factor from Methylobacterium radiotolerans (strain ATCC 27329 / DSM 1819 / JCM 2831 / NBRC 15690 / NCIMB 10815 / 0-1).